The primary structure comprises 452 residues: Neuromedin-K receptor (452 aa).

The Extracellular segment spans residues 1 to 71; that stretch reads MASVPTGENW…TNQFVQPSWR (71 aa). Asn-9, Asn-23, Asn-40, and Asn-60 each carry an N-linked (GlcNAc...) asparagine glycan. Residues 72–94 form a helical membrane-spanning segment; that stretch reads IALWSLAYGLVVAVAVFGNLIVI. Topologically, residues 95 to 104 are cytoplasmic; the sequence is WIILAHKRMR. A helical membrane pass occupies residues 105 to 126; that stretch reads TVTNYFLVNLAFSDASVAAFNT. At 127–146 the chain is on the extracellular side; sequence LVNFIYGVHSEWYFGANYCR. Cys-145 and Cys-220 are joined by a disulfide. A helical transmembrane segment spans residues 147-168; the sequence is FQNFFPITAVFASIYSMTAIAV. The Cytoplasmic portion of the chain corresponds to 169 to 188; sequence DRYMAIIDPLKPRLSATATK. A helical transmembrane segment spans residues 189-209; it reads IVIGSIWILAFLLAFPQCLYS. Topologically, residues 210 to 232 are extracellular; that stretch reads KIKVMPGRTLCYVQWPEGPKQHF. A helical transmembrane segment spans residues 233 to 257; that stretch reads TYHIIVIILVYCFPLLIMGVTYTIV. Residues 258–286 are Cytoplasmic-facing; that stretch reads GITLWGGEIPGDTCDKYHEQLKAKRKVVK. A helical membrane pass occupies residues 287–308; sequence MMIIVVVTFAICWLPYHVYFIL. The Extracellular portion of the chain corresponds to 309–321; the sequence is TAIYQQLNRWKYI. Residues 322–346 traverse the membrane as a helical segment; that stretch reads QQVYLASFWLAMSSTMYNPIIYCCL. At 347–452 the chain is on the cytoplasmic side; sequence NKRFRAGFKR…SPYTSVDEYS (106 aa). Cys-361 carries S-palmitoyl cysteine lipidation. The disordered stretch occupies residues 401 to 452; that stretch reads DPSEGDPAKSSRKKRAVPRDPSANGCSHREFKSASTTSSFISSPYTSVDEYS. Positions 433–452 are enriched in low complexity; it reads SASTTSSFISSPYTSVDEYS.

It belongs to the G-protein coupled receptor 1 family. In terms of processing, the anchoring of this receptor to the plasma membrane is probably mediated by the palmitoylation of a cysteine residue.

It localises to the cell membrane. In terms of biological role, this is a receptor for the tachykinin neuropeptide neuromedin-K (neurokinin B). It is associated with G proteins that activate a phosphatidylinositol-calcium second messenger system. This Mus musculus (Mouse) protein is Neuromedin-K receptor (Tacr3).